A 431-amino-acid polypeptide reads, in one-letter code: Peroxisomal biogenesis factor 3 (431 aa).

Over Met-1–Lys-10 the chain is Peroxisomal. Residues Val-11–Val-28 traverse the membrane as a helical segment. Residues Lys-29 to Leu-431 lie on the Cytoplasmic side of the membrane. The segment at Thr-95–Glu-126 is disordered. Positions Gln-112–Ala-121 are enriched in polar residues.

This sequence belongs to the peroxin-3 family.

Its subcellular location is the peroxisome membrane. Its function is as follows. Involved in peroxisome biosynthesis. Seems to directly or indirectly sequesters components of the peroxisome biogenesis machinery. This Yarrowia lipolytica (strain CLIB 122 / E 150) (Yeast) protein is Peroxisomal biogenesis factor 3 (PEX3).